The primary structure comprises 237 residues: Probable transcriptional regulatory protein MCAP_0598 (237 aa).

It belongs to the TACO1 family.

Its subcellular location is the cytoplasm. The protein is Probable transcriptional regulatory protein MCAP_0598 of Mycoplasma capricolum subsp. capricolum (strain California kid / ATCC 27343 / NCTC 10154).